Here is a 66-residue protein sequence, read N- to C-terminus: UPF0337 protein bsl1473 (66 aa).

This sequence belongs to the UPF0337 (CsbD) family.

The chain is UPF0337 protein bsl1473 from Bradyrhizobium diazoefficiens (strain JCM 10833 / BCRC 13528 / IAM 13628 / NBRC 14792 / USDA 110).